A 692-amino-acid polypeptide reads, in one-letter code: Protein arginine N-methyltransferase 7 (692 aa).

2 consecutive SAM-dependent MTase PRMT-type domains span residues 14 to 345 and 358 to 684; these read SVEW…YCVW and RVRQ…IIME. Arg-32 is modified (omega-N-methylarginine). Catalysis depends on residues Glu-144 and Glu-153.

It belongs to the class I-like SAM-binding methyltransferase superfamily. Protein arginine N-methyltransferase family. PRMT7 subfamily. As to quaternary structure, homodimer and heterodimer. Interacts with CTCFL. Interacts with PRMT5 and SNRPD3.

It localises to the cytoplasm. The protein localises to the cytosol. The protein resides in the nucleus. It catalyses the reaction L-arginyl-[protein] + S-adenosyl-L-methionine = N(omega)-methyl-L-arginyl-[protein] + S-adenosyl-L-homocysteine + H(+). In terms of biological role, arginine methyltransferase that can both catalyze the formation of omega-N monomethylarginine (MMA) and symmetrical dimethylarginine (sDMA), with a preference for the formation of MMA. Specifically mediates the symmetrical dimethylation of arginine residues in the small nuclear ribonucleoproteins Sm D1 (SNRPD1) and Sm D3 (SNRPD3); such methylation being required for the assembly and biogenesis of snRNP core particles. Specifically mediates the symmetric dimethylation of histone H4 'Arg-3' to form H4R3me2s. Plays a role in gene imprinting by being recruited by CTCFL at the H19 imprinted control region (ICR) and methylating histone H4 to form H4R3me2s, possibly leading to recruit DNA methyltransferases at these sites. May also play a role in embryonic stem cell (ESC) pluripotency. Also able to mediate the arginine methylation of histone H2A and myelin basic protein (MBP) in vitro; the relevance of such results is however unclear in vivo. This chain is Protein arginine N-methyltransferase 7 (PRMT7), found in Homo sapiens (Human).